The sequence spans 118 residues: Large ribosomal subunit protein bL19 (118 aa).

It belongs to the bacterial ribosomal protein bL19 family.

Its function is as follows. This protein is located at the 30S-50S ribosomal subunit interface and may play a role in the structure and function of the aminoacyl-tRNA binding site. The protein is Large ribosomal subunit protein bL19 of Campylobacter jejuni subsp. jejuni serotype O:6 (strain 81116 / NCTC 11828).